The sequence spans 904 residues: DNA replication licensing factor MCM2 (904 aa).

Residues 1–12 are compositionally biased toward low complexity; that stretch reads MAESSESLSASS. The interval 1 to 166 is disordered; that stretch reads MAESSESLSA…ATEDGEEDEE (166 aa). N-acetylalanine is present on A2. An interaction with KAT7 region spans residues 2–257; that stretch reads AESSESLSAS…LPEAPAELLQ (256 aa). S12 and S21 each carry phosphoserine. Position 25 is a phosphothreonine (T25). A phosphoserine mark is found at S26, S27, and S32. T39 carries the phosphothreonine modification. A Phosphoserine; by CDC7 modification is found at S40. Residue S41 is modified to Phosphoserine. S53 bears the Phosphoserine; by CDC7 mark. Phosphothreonine is present on T59. The tract at residues 61–130 is interaction with DNJC9; sequence GPMEEEEDGE…DREAGRGLGR (70 aa). Residues 62–73 are compositionally biased toward acidic residues; sequence PMEEEEDGEELI. The segment covering 76–85 has biased composition (basic and acidic residues); that stretch reads GMERDYRPIP. A compositionally biased stretch (acidic residues) spans 88-104; the sequence is DVYEAEGLALDDEDVEE. S108 carries the post-translational modification Phosphoserine. A compositionally biased stretch (basic and acidic residues) spans 111-125; it reads EAAERTMRQRDREAG. A Phosphotyrosine modification is found at Y137. Phosphoserine occurs at positions 139 and 140. Residue K178 forms a Glycyl lysine isopeptide (Lys-Gly) (interchain with G-Cter in SUMO2) linkage. K216 is modified (N6-acetyllysine). A C4-type zinc finger spans residues 329 to 355; that stretch reads CSKCNFVLGPFCQSQNQEVKPGSCPEC. Residues S381 and S484 each carry the phosphoserine modification. Residues 473-680 enclose the MCM domain; that stretch reads IGEKIFASIA…QDEMLARFVV (208 aa). S530 and Q531 together coordinate ADP. Positions 655–658 match the Arginine finger motif; the sequence is SRFD.

This sequence belongs to the MCM family. As to quaternary structure, component of the MCM2-7 complex. The complex forms a toroidal hexameric ring with the proposed subunit order MCM2-MCM6-MCM4-MCM7-MCM3-MCM5. Component of the CMG helicase complex, a hexameric ring of related MCM2-7 subunits stabilized by CDC45 and the tetrameric GINS complex. Interacts with DBF4. Interacts with KAT7. May interact with MCM10. Component of the replisome complex composed of at least DONSON, MCM2, MCM7, PCNA and TICRR. Forms a co-chaperone complex with DNAJC9 and histone H3.3-H4 heterodimers. Within the complex, interacts (via N-terminus) with DNAJC9 (via C-terminus); the interaction is histone-dependent. Interacts with AGER/RAGE; the interaction is increased following DNA replication stress and stabilizes the MCM2-7 complex at replication forks. In terms of processing, phosphorylated on Ser-108 by ATR in proliferating cells. Ser-108 proliferation is increased by genotoxic agents. Ser-40 is mediated by the CDC7-DBF4 and CDC7-DBF4B complexes, while Ser-53 phosphorylation is only mediated by the CDC7-DBF4 complex. Phosphorylation by the CDC7-DBF4 complex during G1/S phase is required for the initiation of DNA replication. Acetylated by MCM3AP. Post-translationally, O-glycosylated (O-GlcNAcylated), in a cell cycle-dependent manner.

The protein localises to the nucleus. Its subcellular location is the chromosome. The catalysed reaction is ATP + H2O = ADP + phosphate + H(+). Acts as a component of the MCM2-7 complex (MCM complex) which is the replicative helicase essential for 'once per cell cycle' DNA replication initiation and elongation in eukaryotic cells. Core component of CDC45-MCM-GINS (CMG) helicase, the molecular machine that unwinds template DNA during replication, and around which the replisome is built. The active ATPase sites in the MCM2-7 ring are formed through the interaction surfaces of two neighboring subunits such that a critical structure of a conserved arginine finger motif is provided in trans relative to the ATP-binding site of the Walker A box of the adjacent subunit. The six ATPase active sites, however, are likely to contribute differentially to the complex helicase activity. Required for the entry in S phase and for cell division. Plays a role in terminally differentiated hair cells development of the cochlea and induces cells apoptosis. This Mus musculus (Mouse) protein is DNA replication licensing factor MCM2 (Mcm2).